Reading from the N-terminus, the 586-residue chain is A-type ATP synthase subunit A (586 aa).

Residue 233–240 coordinates ATP; that stretch reads GPFGSGKT.

The protein belongs to the ATPase alpha/beta chains family. Has multiple subunits with at least A(3), B(3), C, D, E, F, H, I and proteolipid K(x).

The protein localises to the cell membrane. It catalyses the reaction ATP + H2O + 4 H(+)(in) = ADP + phosphate + 5 H(+)(out). Functionally, component of the A-type ATP synthase that produces ATP from ADP in the presence of a proton gradient across the membrane. The A chain is the catalytic subunit. This Methanococcus aeolicus (strain ATCC BAA-1280 / DSM 17508 / OCM 812 / Nankai-3) protein is A-type ATP synthase subunit A.